Here is a 252-residue protein sequence, read N- to C-terminus: Thiazole synthase (252 aa).

Lys98 acts as the Schiff-base intermediate with DXP in catalysis. Residues Gly159, 185-186 (AG), and 207-208 (AS) each bind 1-deoxy-D-xylulose 5-phosphate.

The protein belongs to the ThiG family. Homotetramer. Forms heterodimers with either ThiH or ThiS.

The protein resides in the cytoplasm. The enzyme catalyses [ThiS sulfur-carrier protein]-C-terminal-Gly-aminoethanethioate + 2-iminoacetate + 1-deoxy-D-xylulose 5-phosphate = [ThiS sulfur-carrier protein]-C-terminal Gly-Gly + 2-[(2R,5Z)-2-carboxy-4-methylthiazol-5(2H)-ylidene]ethyl phosphate + 2 H2O + H(+). Its pathway is cofactor biosynthesis; thiamine diphosphate biosynthesis. Functionally, catalyzes the rearrangement of 1-deoxy-D-xylulose 5-phosphate (DXP) to produce the thiazole phosphate moiety of thiamine. Sulfur is provided by the thiocarboxylate moiety of the carrier protein ThiS. In vitro, sulfur can be provided by H(2)S. The protein is Thiazole synthase of Mycobacterium tuberculosis (strain ATCC 25177 / H37Ra).